The following is a 312-amino-acid chain: 2-dehydropantoate 2-reductase (312 aa).

NADP(+) contacts are provided by residues 7 to 12 (GAGAMG), asparagine 105, and alanine 131. Asparagine 105 serves as a coordination point for substrate. Residue lysine 187 is the Proton donor of the active site. Substrate is bound by residues asparagine 191, asparagine 195, and serine 260. Glutamate 273 is a binding site for NADP(+).

Belongs to the ketopantoate reductase family.

The protein resides in the cytoplasm. The catalysed reaction is (R)-pantoate + NADP(+) = 2-dehydropantoate + NADPH + H(+). The protein operates within cofactor biosynthesis; (R)-pantothenate biosynthesis; (R)-pantoate from 3-methyl-2-oxobutanoate: step 2/2. In terms of biological role, catalyzes the NADPH-dependent reduction of ketopantoate into pantoic acid. The protein is 2-dehydropantoate 2-reductase of Lactococcus lactis subsp. lactis (strain IL1403) (Streptococcus lactis).